A 90-amino-acid chain; its full sequence is Small ribosomal subunit protein uS15c (90 aa).

This sequence belongs to the universal ribosomal protein uS15 family. In terms of assembly, part of the 30S ribosomal subunit.

The protein localises to the plastid. Its subcellular location is the chloroplast. The polypeptide is Small ribosomal subunit protein uS15c (rps15) (Citrus sinensis (Sweet orange)).